Reading from the N-terminus, the 205-residue chain is Protein-L-isoaspartate O-methyltransferase (205 aa).

Residue Ser56 is part of the active site.

Belongs to the methyltransferase superfamily. L-isoaspartyl/D-aspartyl protein methyltransferase family.

It is found in the cytoplasm. The catalysed reaction is [protein]-L-isoaspartate + S-adenosyl-L-methionine = [protein]-L-isoaspartate alpha-methyl ester + S-adenosyl-L-homocysteine. In terms of biological role, catalyzes the methyl esterification of L-isoaspartyl residues in peptides and proteins that result from spontaneous decomposition of normal L-aspartyl and L-asparaginyl residues. It plays a role in the repair and/or degradation of damaged proteins. This chain is Protein-L-isoaspartate O-methyltransferase, found in Pyrobaculum arsenaticum (strain DSM 13514 / JCM 11321 / PZ6).